The chain runs to 160 residues: Cytochrome b6-f complex subunit 4 (160 aa).

A run of 3 helical transmembrane segments spans residues 36-56 (LLYI…GLAV), 95-115 (LLGV…PFLE), and 131-151 (TIFL…ALPI).

This sequence belongs to the cytochrome b family. PetD subfamily. In terms of assembly, the 4 large subunits of the cytochrome b6-f complex are cytochrome b6, subunit IV (17 kDa polypeptide, petD), cytochrome f and the Rieske protein, while the 4 small subunits are petG, petL, petM and petN. The complex functions as a dimer.

It localises to the plastid. The protein localises to the chloroplast thylakoid membrane. Functionally, component of the cytochrome b6-f complex, which mediates electron transfer between photosystem II (PSII) and photosystem I (PSI), cyclic electron flow around PSI, and state transitions. The protein is Cytochrome b6-f complex subunit 4 of Anthoceros angustus (Hornwort).